We begin with the raw amino-acid sequence, 690 residues long: DNA ligase (690 aa).

NAD(+) contacts are provided by residues 49-53, 98-99, and Glu-129; these read DAEYD and SL. The active-site N6-AMP-lysine intermediate is Lys-131. NAD(+) is bound by residues Arg-152, Glu-191, Lys-308, and Lys-332. Residues Cys-426, Cys-429, Cys-444, and Cys-450 each coordinate Zn(2+). Residues 607-690 enclose the BRCT domain; sequence EDAARLEGLT…ALLREQGIDA (84 aa).

This sequence belongs to the NAD-dependent DNA ligase family. LigA subfamily. Requires Mg(2+) as cofactor. Mn(2+) is required as a cofactor.

The enzyme catalyses NAD(+) + (deoxyribonucleotide)n-3'-hydroxyl + 5'-phospho-(deoxyribonucleotide)m = (deoxyribonucleotide)n+m + AMP + beta-nicotinamide D-nucleotide.. Its function is as follows. DNA ligase that catalyzes the formation of phosphodiester linkages between 5'-phosphoryl and 3'-hydroxyl groups in double-stranded DNA using NAD as a coenzyme and as the energy source for the reaction. It is essential for DNA replication and repair of damaged DNA. This is DNA ligase from Salinibacter ruber (strain DSM 13855 / M31).